We begin with the raw amino-acid sequence, 308 residues long: F420-non-reducing hydrogenase subunit G (308 aa).

This sequence belongs to the [NiFe]/[NiFeSe] hydrogenase small subunit family. As to quaternary structure, the F420-non-reducing hydrogenase is composed of three subunits; MvhA, MvhD and MvhG. It forms a complex with the heterodisulfide reductase (hdr).

Functionally, part of a complex that provides reducing equivalents for heterodisulfide reductase. The sequence is that of F420-non-reducing hydrogenase subunit G (mvhG) from Methanothermobacter thermautotrophicus (strain ATCC 29096 / DSM 1053 / JCM 10044 / NBRC 100330 / Delta H) (Methanobacterium thermoautotrophicum).